The sequence spans 297 residues: Aspartate carbamoyltransferase catalytic subunit (297 aa).

Residues arginine 49 and threonine 50 each contribute to the carbamoyl phosphate site. Position 77 (lysine 77) interacts with L-aspartate. The carbamoyl phosphate site is built by arginine 99, histidine 129, and glutamine 132. L-aspartate contacts are provided by arginine 162 and arginine 215. Glycine 256 and proline 257 together coordinate carbamoyl phosphate.

It belongs to the aspartate/ornithine carbamoyltransferase superfamily. ATCase family. As to quaternary structure, heterododecamer (2C3:3R2) of six catalytic PyrB chains organized as two trimers (C3), and six regulatory PyrI chains organized as three dimers (R2).

The enzyme catalyses carbamoyl phosphate + L-aspartate = N-carbamoyl-L-aspartate + phosphate + H(+). Its pathway is pyrimidine metabolism; UMP biosynthesis via de novo pathway; (S)-dihydroorotate from bicarbonate: step 2/3. In terms of biological role, catalyzes the condensation of carbamoyl phosphate and aspartate to form carbamoyl aspartate and inorganic phosphate, the committed step in the de novo pyrimidine nucleotide biosynthesis pathway. This chain is Aspartate carbamoyltransferase catalytic subunit, found in Legionella pneumophila (strain Lens).